We begin with the raw amino-acid sequence, 145 residues long: 3-hydroxyacyl-[acyl-carrier-protein] dehydratase FabZ (145 aa).

H51 is a catalytic residue.

Belongs to the thioester dehydratase family. FabZ subfamily.

Its subcellular location is the cytoplasm. The catalysed reaction is a (3R)-hydroxyacyl-[ACP] = a (2E)-enoyl-[ACP] + H2O. Involved in unsaturated fatty acids biosynthesis. Catalyzes the dehydration of short chain beta-hydroxyacyl-ACPs and long chain saturated and unsaturated beta-hydroxyacyl-ACPs. In Staphylococcus haemolyticus (strain JCSC1435), this protein is 3-hydroxyacyl-[acyl-carrier-protein] dehydratase FabZ.